The sequence spans 647 residues: DNA mismatch repair protein MutL (647 aa).

The segment covering 387–400 (SAKPVHEATDEKAE) has biased composition (basic and acidic residues). Positions 387-412 (SAKPVHEATDEKAEPQSTSVKFAERK) are disordered.

The protein belongs to the DNA mismatch repair MutL/HexB family.

Its function is as follows. This protein is involved in the repair of mismatches in DNA. It is required for dam-dependent methyl-directed DNA mismatch repair. May act as a 'molecular matchmaker', a protein that promotes the formation of a stable complex between two or more DNA-binding proteins in an ATP-dependent manner without itself being part of a final effector complex. This is DNA mismatch repair protein MutL from Streptococcus sanguinis (strain SK36).